The sequence spans 711 residues: DNA topoisomerase 1 (711 aa).

A Toprim domain is found at Lys3–Ile134. Positions 9 and 102 each coordinate Mg(2+). The Topo IA-type catalytic domain occupies Asp150–Lys604. Positions Ser183–Gln188 are interaction with DNA. Tyr340 (O-(5'-phospho-DNA)-tyrosine intermediate) is an active-site residue. C4-type zinc fingers lie at residues Cys624–Cys652 and Cys673–Cys702.

The protein belongs to the type IA topoisomerase family. As to quaternary structure, monomer. Mg(2+) is required as a cofactor.

It catalyses the reaction ATP-independent breakage of single-stranded DNA, followed by passage and rejoining.. Its function is as follows. Releases the supercoiling and torsional tension of DNA, which is introduced during the DNA replication and transcription, by transiently cleaving and rejoining one strand of the DNA duplex. Introduces a single-strand break via transesterification at a target site in duplex DNA. The scissile phosphodiester is attacked by the catalytic tyrosine of the enzyme, resulting in the formation of a DNA-(5'-phosphotyrosyl)-enzyme intermediate and the expulsion of a 3'-OH DNA strand. The free DNA strand then undergoes passage around the unbroken strand, thus removing DNA supercoils. Finally, in the religation step, the DNA 3'-OH attacks the covalent intermediate to expel the active-site tyrosine and restore the DNA phosphodiester backbone. The polypeptide is DNA topoisomerase 1 (Mycoplasma pneumoniae (strain ATCC 29342 / M129 / Subtype 1) (Mycoplasmoides pneumoniae)).